Reading from the N-terminus, the 415-residue chain is Gamma-glutamyl phosphate reductase (415 aa).

Belongs to the gamma-glutamyl phosphate reductase family.

It is found in the cytoplasm. It catalyses the reaction L-glutamate 5-semialdehyde + phosphate + NADP(+) = L-glutamyl 5-phosphate + NADPH + H(+). The protein operates within amino-acid biosynthesis; L-proline biosynthesis; L-glutamate 5-semialdehyde from L-glutamate: step 2/2. Its function is as follows. Catalyzes the NADPH-dependent reduction of L-glutamate 5-phosphate into L-glutamate 5-semialdehyde and phosphate. The product spontaneously undergoes cyclization to form 1-pyrroline-5-carboxylate. The chain is Gamma-glutamyl phosphate reductase from Bacillus cereus (strain 03BB102).